A 351-amino-acid polypeptide reads, in one-letter code: Holliday junction branch migration complex subunit RuvB (351 aa).

The large ATPase domain (RuvB-L) stretch occupies residues 4–185 (HDRELVSPEA…FGFVAHMDFY (182 aa)). Residues Leu24, Arg25, Gly66, Lys69, Thr70, Thr71, 132 to 134 (EDF), Arg175, Tyr185, and Arg222 each bind ATP. Position 70 (Thr70) interacts with Mg(2+). The segment at 186 to 256 (SPEELELILH…CARAALSLYE (71 aa)) is small ATPAse domain (RuvB-S). The head domain (RuvB-H) stretch occupies residues 259–351 (DEGLDRLDRA…AALFDPDEEP (93 aa)). The DNA site is built by Arg314 and Arg319.

It belongs to the RuvB family. As to quaternary structure, homohexamer. Forms an RuvA(8)-RuvB(12)-Holliday junction (HJ) complex. HJ DNA is sandwiched between 2 RuvA tetramers; dsDNA enters through RuvA and exits via RuvB. An RuvB hexamer assembles on each DNA strand where it exits the tetramer. Each RuvB hexamer is contacted by two RuvA subunits (via domain III) on 2 adjacent RuvB subunits; this complex drives branch migration. In the full resolvosome a probable DNA-RuvA(4)-RuvB(12)-RuvC(2) complex forms which resolves the HJ.

Its subcellular location is the cytoplasm. It carries out the reaction ATP + H2O = ADP + phosphate + H(+). Functionally, the RuvA-RuvB-RuvC complex processes Holliday junction (HJ) DNA during genetic recombination and DNA repair, while the RuvA-RuvB complex plays an important role in the rescue of blocked DNA replication forks via replication fork reversal (RFR). RuvA specifically binds to HJ cruciform DNA, conferring on it an open structure. The RuvB hexamer acts as an ATP-dependent pump, pulling dsDNA into and through the RuvAB complex. RuvB forms 2 homohexamers on either side of HJ DNA bound by 1 or 2 RuvA tetramers; 4 subunits per hexamer contact DNA at a time. Coordinated motions by a converter formed by DNA-disengaged RuvB subunits stimulates ATP hydrolysis and nucleotide exchange. Immobilization of the converter enables RuvB to convert the ATP-contained energy into a lever motion, pulling 2 nucleotides of DNA out of the RuvA tetramer per ATP hydrolyzed, thus driving DNA branch migration. The RuvB motors rotate together with the DNA substrate, which together with the progressing nucleotide cycle form the mechanistic basis for DNA recombination by continuous HJ branch migration. Branch migration allows RuvC to scan DNA until it finds its consensus sequence, where it cleaves and resolves cruciform DNA. The protein is Holliday junction branch migration complex subunit RuvB of Thermobifida fusca (strain YX).